The primary structure comprises 470 residues: BTB/POZ domain-containing protein 17 (470 aa).

Positions Met-1 to Ser-18 are cleaved as a signal peptide. Residues Ser-53–Leu-122 enclose the BTB domain. The 101-residue stretch at Val-161–Gln-261 folds into the BACK domain.

It localises to the secreted. The protein is BTB/POZ domain-containing protein 17 (btbd17) of Xenopus laevis (African clawed frog).